Here is a 121-residue protein sequence, read N- to C-terminus: Large ribosomal subunit protein bL12 (121 aa).

It belongs to the bacterial ribosomal protein bL12 family. As to quaternary structure, homodimer. Part of the ribosomal stalk of the 50S ribosomal subunit. Forms a multimeric L10(L12)X complex, where L10 forms an elongated spine to which 2 to 4 L12 dimers bind in a sequential fashion. Binds GTP-bound translation factors.

Forms part of the ribosomal stalk which helps the ribosome interact with GTP-bound translation factors. Is thus essential for accurate translation. In Serratia proteamaculans (strain 568), this protein is Large ribosomal subunit protein bL12.